The following is a 508-amino-acid chain: Transposase (508 aa).

The HTH IS21-type domain occupies leucine 3 to leucine 65. The 176-residue stretch at leucine 124 to valine 299 folds into the Integrase catalytic domain.

Belongs to the transposase IS21/IS408/IS1162 family.

Its function is as follows. Required for the transposition of the insertion element. In Aminobacter aminovorans (Chelatobacter heintzii), this protein is Transposase (nmoT).